We begin with the raw amino-acid sequence, 182 residues long: Ribosome-recycling factor (182 aa).

It belongs to the RRF family.

The protein localises to the cytoplasm. Responsible for the release of ribosomes from messenger RNA at the termination of protein biosynthesis. May increase the efficiency of translation by recycling ribosomes from one round of translation to another. This chain is Ribosome-recycling factor, found in Prochlorococcus marinus (strain MIT 9215).